A 500-amino-acid chain; its full sequence is MAPPSAPLLEQAPGEVGPTRRRGRRPRALKFADVAVYFSSEEWGRLRPAQRTLYRDVMRETYGLLGALGCAGPKPALITWLERNTDDWEPAALDPQEYRRWVTFQRKTRTRQKNEEKEVFPPKDVPRKGKRGRKPSKPRLIARQTSGGPICPDCGCTFPDLPALESHKCAQNLKKPYPCPDCGRRFSYPSLLVSHRRAHSGECPYVCDQCGKRFSQRKNLSQHQVIHTGEKPYHCPDCGRCFRRSRSLANHRTTHTGEKPHQCPSCGRRFAYPSLLAIHQRTHTGEKPYTCLECSRRFRQRTALVIHQRIHTGEKPYPCPDCERRFSSSSRLVSHRRVHSGERPYACEHCEARFSQRSTLLQHQLLHTGEKPYPCPDCGRAFRRSGSLAIHRSTHTEEKLHACDDCGRRFAYPSLLASHRRVHSGERPYACDLCSKRFAQWSHLAQHQLLHTGEKPFPCLECGRCFRQRWSLAVHKCCPNTHNGSPRPLIGGPNQRSSAL.

The interval M1 to R24 is disordered. In terms of domain architecture, KRAB spans L29 to R100. A disordered region spans residues T110–Q144. Positions Q112–R127 are enriched in basic and acidic residues. A compositionally biased stretch (basic residues) spans K128 to K137. The C2H2-type 1; degenerate zinc finger occupies P149–Q171. 10 consecutive C2H2-type zinc fingers follow at residues Y177–H199, Y205–H227, Y233–H255, H261–H283, Y289–H311, Y317–H339, Y345–H367, Y373–H395, H401–H423, and Y429–H451. K455 participates in a covalent cross-link: Glycyl lysine isopeptide (Lys-Gly) (interchain with G-Cter in SUMO2). The C2H2-type 12 zinc-finger motif lies at F457–H482.

Belongs to the krueppel C2H2-type zinc-finger protein family.

The protein resides in the nucleus. Its function is as follows. May be involved in transcriptional regulation. The sequence is that of Zinc finger protein 689 (Znf689) from Rattus norvegicus (Rat).